Consider the following 427-residue polypeptide: Inward rectifier potassium channel 2 (427 aa).

The Cytoplasmic segment spans residues 1–81; the sequence is MGSVRTNRYS…IFTTCVDIRW (81 aa). An S-nitrosocysteine modification is found at Cys-76. The chain crosses the membrane as a helical span at residues 82–106; sequence RWMLVIFCLAFVLSWLFFGCVFWLI. Topologically, residues 107-128 are extracellular; that stretch reads ALLHGDLDASKESKACVSEVNS. The segment at residues 129 to 140 is an intramembrane region (helical; Pore-forming); sequence FTAAFLFSIETQ. Residues 141-147 constitute an intramembrane region (pore-forming); sequence TTIGYGF. Positions 142-147 match the Selectivity filter motif; that stretch reads TIGYGF. At 148–156 the chain is on the extracellular side; sequence RCVTDECPI. A helical membrane pass occupies residues 157–178; the sequence is AVFMVVFQSIVGCIIDAFIIGA. The Cytoplasmic portion of the chain corresponds to 179–427; the sequence is VMAKMAKPKK…PRPLRRESEI (249 aa). The segment at 181-208 is polyphosphoinositide (PIP2)-binding; the sequence is AKMAKPKKRNETLVFSHNAVIAMRDGKL. The segment at 383 to 427 is disordered; it reads TSKEEEDSENGVPESTSTDSPPGIDLHNQASVPLEPRPLRRESEI. The PDZ-binding motif lies at 425–427; the sequence is SEI.

The protein belongs to the inward rectifier-type potassium channel (TC 1.A.2.1) family. KCNJ2 subfamily. As to quaternary structure, homotetramer. Homomultimeric and heteromultimeric association with KCNJ4/Kir2.3. Can form heteromeric channels with Kir2.6/KCNJ18. Associates, via its PDZ-recognition domain, with a complex containing LIN7A, LIN7B, LIN7C, DLG1, CASK and APBA1. In terms of processing, S-nitrosylation increases the open probability and inward rectifying currents. In terms of tissue distribution, prominently expressed in the central nervous system. Also found in other excitable tissues such as heart and skeletal muscle.

The protein localises to the cell membrane. It is found in the sarcolemma. Its subcellular location is the T-tubule. It catalyses the reaction K(+)(in) = K(+)(out). Activated by phosphatidylinositol 4,5 biphosphate (PtdIns(4,5)P2). Functionally, inward rectifier potassium channels are characterized by a greater tendency to allow potassium to flow into the cell rather than out of it. Their voltage dependence is regulated by the concentration of extracellular potassium; as external potassium is raised, the voltage range of the channel opening shifts to more positive voltages. The inward rectification is mainly due to the blockage of outward current by internal magnesium. Can be blocked by extracellular barium and cesium. Probably participates in establishing action potential waveform and excitability of neuronal and muscle tissues. In Rattus norvegicus (Rat), this protein is Inward rectifier potassium channel 2 (Kcnj2).